Here is a 137-residue protein sequence, read N- to C-terminus: Ribonuclease P protein component (137 aa).

Belongs to the RnpA family. In terms of assembly, consists of a catalytic RNA component (M1 or rnpB) and a protein subunit.

It carries out the reaction Endonucleolytic cleavage of RNA, removing 5'-extranucleotides from tRNA precursor.. In terms of biological role, RNaseP catalyzes the removal of the 5'-leader sequence from pre-tRNA to produce the mature 5'-terminus. It can also cleave other RNA substrates such as 4.5S RNA. The protein component plays an auxiliary but essential role in vivo by binding to the 5'-leader sequence and broadening the substrate specificity of the ribozyme. The sequence is that of Ribonuclease P protein component from Porphyromonas gingivalis (strain ATCC BAA-308 / W83).